The primary structure comprises 177 residues: Protein C2-DOMAIN ABA-RELATED 4 (177 aa).

The C2 domain maps to 4–118; sequence ACPARTSSLM…LRMQLDGLPS (115 aa). Positions 33, 34, 39, 85, 86, 87, and 93 each coordinate Ca(2+).

This sequence belongs to the plant CAR protein family. Dimers and oligomers. Binds to PYR/PYL/RCAR abscisic acid intracellular receptors in an ABA-independent manner, both at the plasma membrane and in the nucleus. Interacts directly with PYR1, PYL1, PYL4, PYL6 and PYL8. Binds phospholipids in a Ca(2+)-dependent manner. Interacts with YchF1. Ca(2+) serves as cofactor.

It is found in the cell membrane. It localises to the nucleus. Its subcellular location is the cytoplasm. The protein resides in the cytosol. Its function is as follows. Mediates the transient calcium-dependent interaction of PYR/PYL/RCAR abscisic acid (ABA) receptors with the plasma membrane and thus regulates ABA sensitivity. Stimulates the GTPase/ATPase activities of YchF1, and regulates its subcellular localization. Promotes tolerance towards salinity stress by limiting the accumulation of reactive oxygen species (ROS). Promotes resistance to bacterial pathogens (e.g. Xanthomonas oryzae pv. oryzae and P.syringae pv. tomato DC3000). Binds liposomes in the absence of exogenous Ca(2+), but this activity is enhanced in the presence of Ca(2+) and generates membrane curvature. In Arabidopsis thaliana (Mouse-ear cress), this protein is Protein C2-DOMAIN ABA-RELATED 4.